A 359-amino-acid chain; its full sequence is Growth hormone-regulated TBC protein 1 (359 aa).

Residues 74–281 form the Rab-GAP TBC domain; the sequence is GIPLEHRARV…RIWDCLFNEG (208 aa).

As to expression, highly expressed in testes, expression greatly increased at postnatal day 20 and remained high up to day 90. Moderately expressed in kidney and liver, weakly expressed in intestine, lung, ovaries and stomach. Expression of Growth hormone increased the expression in testis but decreased expression in liver and kidney.

Functionally, may act as a GTPase-activating protein for Rab family protein(s). The chain is Growth hormone-regulated TBC protein 1 (Grtp1) from Mus musculus (Mouse).